We begin with the raw amino-acid sequence, 322 residues long: Phosphatidylserine decarboxylase proenzyme (322 aa).

Residues aspartate 90, histidine 147, and serine 254 each act as charge relay system; for autoendoproteolytic cleavage activity in the active site. Residue serine 254 is the Schiff-base intermediate with substrate; via pyruvic acid; for decarboxylase activity of the active site. A Pyruvic acid (Ser); by autocatalysis modification is found at serine 254. The disordered stretch occupies residues 293–322 (PDAEPAPLPAEEIEAEHDASPLIDDKKDQV). Residues 308–322 (EHDASPLIDDKKDQV) are compositionally biased toward basic and acidic residues.

The protein belongs to the phosphatidylserine decarboxylase family. PSD-B subfamily. Prokaryotic type I sub-subfamily. In terms of assembly, heterodimer of a large membrane-associated beta subunit and a small pyruvoyl-containing alpha subunit. Requires pyruvate as cofactor. Post-translationally, is synthesized initially as an inactive proenzyme. Formation of the active enzyme involves a self-maturation process in which the active site pyruvoyl group is generated from an internal serine residue via an autocatalytic post-translational modification. Two non-identical subunits are generated from the proenzyme in this reaction, and the pyruvate is formed at the N-terminus of the alpha chain, which is derived from the carboxyl end of the proenzyme. The autoendoproteolytic cleavage occurs by a canonical serine protease mechanism, in which the side chain hydroxyl group of the serine supplies its oxygen atom to form the C-terminus of the beta chain, while the remainder of the serine residue undergoes an oxidative deamination to produce ammonia and the pyruvoyl prosthetic group on the alpha chain. During this reaction, the Ser that is part of the protease active site of the proenzyme becomes the pyruvoyl prosthetic group, which constitutes an essential element of the active site of the mature decarboxylase.

It is found in the cell membrane. The enzyme catalyses a 1,2-diacyl-sn-glycero-3-phospho-L-serine + H(+) = a 1,2-diacyl-sn-glycero-3-phosphoethanolamine + CO2. It participates in phospholipid metabolism; phosphatidylethanolamine biosynthesis; phosphatidylethanolamine from CDP-diacylglycerol: step 2/2. Its function is as follows. Catalyzes the formation of phosphatidylethanolamine (PtdEtn) from phosphatidylserine (PtdSer). This Escherichia coli O127:H6 (strain E2348/69 / EPEC) protein is Phosphatidylserine decarboxylase proenzyme.